A 1158-amino-acid polypeptide reads, in one-letter code: MDPRKSIDKPPHHDPILGVSSRWSVSSKDNKEVTFGDLGSKRIRHGSAGADSEMLSMSQKEIKDEDARLIYINDPDRTNERFEFTGNSIKTAKYSVFTFLPRNLFEQFHRVAYIYFLVIAVLNQLPQLAVFGRGASIMPLAFVLLVSAIKDAYEDFRRHRSDRVENNRLALVFEDHQFREKKWKHIRVGEVIKVQSNQTLPCDMVLLATSDPTGVVYVQTTNLDGESNLKTRYAKQETLLKAADMESFNGFIKCEKPNRNIYGFQANMEIDGRRLSLGPSNIILRGCELKNTAWALGVVVYAGGETKAMLNNSGAPSKRSRLETRMNLEIILLSLFLIVLCTIAAATAAVWLRTHRDDLDTILFYRRKDYSERPGGKNYKYYGWGWEIFFTFFMAVIVYQIMIPISLYISMELVRIGQAYFMTNDDQMYDESSDSSFQCRALNINEDLGQIKYLFSDKTGTLTDNKMEFQCACIEGVDYSDREPADSEHPGYSIEVDGIILKPKMRVRVDPVLLQLTKTGKATEEAKRANEFFLSLAACNTIVPIVSNTSDPNVKLVDYQGESPDEQALVYAAAAYGFLLIERTSGHIVINVRGETQRFNVLGLHEFDSDRKRMSVILGCPDMSVKLFVKGADSSMFGVMDESYGGVIHETKIQLHAYSSDGLRTLVVGMRELNDSEFEQWHSSFEAASTALIGRAGLLRKVAGNIETNLRIVGATAIEDKLQRGVPEAIESLRIAGIKVWVLTGDKQETAISIGFSSRLLTRNMRQIVINSNSLDSCRRSLEEANASIASNDESDNVALIIDGTSLIYVLDNDLEDVLFQVACKCSAILCCRVAPFQKAGIVALVKNRTSDMTLAIGDGANDVSMIQMADVGVGISGQEGRQAVMASDFAMGQFRFLVPLLLVHGHWNYQRMGYMILYNFYRNAVFVLILFWYVLFTCYTLTTAITEWSSVLYSVIYTAIPTIIIGILDKDLGRQTLLDHPQLYGVGQRAEGYSTTLFWYTMIDTIWQSAAIFFIPMFAYWGSTIDTSSLGDLWTIAAVVVVNLHLAMDVIRWNWITHAAIWGSIVAACICVIVIDVIPTLPGYWAIFQVGKTWMFWFCLLAIVVTSLLPRFAIKFLVEYYRPSDVRIAREAEKLGTFRESQPVGVEMNLIQDPPRR.

The segment covering 1 to 15 (MDPRKSIDKPPHHDP) has biased composition (basic and acidic residues). A disordered region spans residues 1–30 (MDPRKSIDKPPHHDPILGVSSRWSVSSKDN). The Cytoplasmic segment spans residues 1 to 100 (MDPRKSIDKP…TAKYSVFTFL (100 aa)). The helical transmembrane segment at 101-122 (PRNLFEQFHRVAYIYFLVIAVL) threads the bilayer. The Extracellular segment spans residues 123–127 (NQLPQ). Residues 128-150 (LAVFGRGASIMPLAFVLLVSAIK) form a helical membrane-spanning segment. The Cytoplasmic portion of the chain corresponds to 151–329 (DAYEDFRRHR…SRLETRMNLE (179 aa)). Residues 330–351 (IILLSLFLIVLCTIAAATAAVW) form a helical membrane-spanning segment. Over 352–391 (LRTHRDDLDTILFYRRKDYSERPGGKNYKYYGWGWEIFFT) the chain is Extracellular. The chain crosses the membrane as a helical span at residues 392–409 (FFMAVIVYQIMIPISLYI). Over 410–914 (SMELVRIGQA…HGHWNYQRMG (505 aa)) the chain is Cytoplasmic. Residue aspartate 457 is the 4-aspartylphosphate intermediate of the active site. Mg(2+) is bound by residues aspartate 859 and aspartate 863. Residues 915–934 (YMILYNFYRNAVFVLILFWY) traverse the membrane as a helical segment. At 935-948 (VLFTCYTLTTAITE) the chain is on the extracellular side. The chain crosses the membrane as a helical span at residues 949–968 (WSSVLYSVIYTAIPTIIIGI). The Cytoplasmic segment spans residues 969-998 (LDKDLGRQTLLDHPQLYGVGQRAEGYSTTL). The chain crosses the membrane as a helical span at residues 999 to 1020 (FWYTMIDTIWQSAAIFFIPMFA). Residues 1021-1027 (YWGSTID) are Extracellular-facing. A helical membrane pass occupies residues 1028 to 1050 (TSSLGDLWTIAAVVVVNLHLAMD). Residues 1051 to 1056 (VIRWNW) lie on the Cytoplasmic side of the membrane. A helical membrane pass occupies residues 1057–1077 (ITHAAIWGSIVAACICVIVID). Over 1078–1090 (VIPTLPGYWAIFQ) the chain is Extracellular. Residues 1091 to 1115 (VGKTWMFWFCLLAIVVTSLLPRFAI) traverse the membrane as a helical segment. The Cytoplasmic portion of the chain corresponds to 1116–1158 (KFLVEYYRPSDVRIAREAEKLGTFRESQPVGVEMNLIQDPPRR).

Belongs to the cation transport ATPase (P-type) (TC 3.A.3) family. Type IV subfamily. As to expression, expressed in roots, flowers, anthers, leaves, vascular tissues and stems.

It localises to the endoplasmic reticulum membrane. It is found in the cell membrane. It carries out the reaction ATP + H2O + phospholipidSide 1 = ADP + phosphate + phospholipidSide 2.. Involved in transport of phospholipids. Contributes to transmembrane flipping of lipids. Has activity with phosphatidylserine and with a much lower efficiency with phosphatidylethanolamine, but not with phosphatidylcholine. The chain is Phospholipid-transporting ATPase 1 from Arabidopsis thaliana (Mouse-ear cress).